We begin with the raw amino-acid sequence, 284 residues long: NAD kinase (284 aa).

Asp-70 acts as the Proton acceptor in catalysis. NAD(+) is bound by residues 70 to 71 (DG), 139 to 140 (NE), Lys-167, Asp-169, Leu-177, 180 to 185 (TAYNLS), and Gln-236.

The protein belongs to the NAD kinase family. A divalent metal cation is required as a cofactor.

The protein resides in the cytoplasm. The catalysed reaction is NAD(+) + ATP = ADP + NADP(+) + H(+). Its function is as follows. Involved in the regulation of the intracellular balance of NAD and NADP, and is a key enzyme in the biosynthesis of NADP. Catalyzes specifically the phosphorylation on 2'-hydroxyl of the adenosine moiety of NAD to yield NADP. The sequence is that of NAD kinase from Helicobacter pylori (strain J99 / ATCC 700824) (Campylobacter pylori J99).